The chain runs to 248 residues: Probable transcriptional regulatory protein R02753 (248 aa).

It belongs to the TACO1 family.

It is found in the cytoplasm. The chain is Probable transcriptional regulatory protein R02753 from Rhizobium meliloti (strain 1021) (Ensifer meliloti).